The chain runs to 126 residues: Aspartate 1-decarboxylase (126 aa).

Catalysis depends on Ser25, which acts as the Schiff-base intermediate with substrate; via pyruvic acid. Residue Ser25 is modified to Pyruvic acid (Ser). Thr57 provides a ligand contact to substrate. Tyr58 serves as the catalytic Proton donor. Residue 73-75 (GAA) coordinates substrate.

The protein belongs to the PanD family. As to quaternary structure, heterooctamer of four alpha and four beta subunits. Pyruvate serves as cofactor. Post-translationally, is synthesized initially as an inactive proenzyme, which is activated by self-cleavage at a specific serine bond to produce a beta-subunit with a hydroxyl group at its C-terminus and an alpha-subunit with a pyruvoyl group at its N-terminus.

It localises to the cytoplasm. It carries out the reaction L-aspartate + H(+) = beta-alanine + CO2. Its pathway is cofactor biosynthesis; (R)-pantothenate biosynthesis; beta-alanine from L-aspartate: step 1/1. In terms of biological role, catalyzes the pyruvoyl-dependent decarboxylation of aspartate to produce beta-alanine. The protein is Aspartate 1-decarboxylase of Chromohalobacter salexigens (strain ATCC BAA-138 / DSM 3043 / CIP 106854 / NCIMB 13768 / 1H11).